The following is a 500-amino-acid chain: Alpha-L-arabinofuranosidase (500 aa).

The first 21 residues, 1–21 (MLSNARIIAAGCIAAGSLVAA), serve as a signal peptide directing secretion. The N-linked (GlcNAc...) asparagine glycan is linked to asparagine 467.

Belongs to the glycosyl hydrolase 54 family.

The enzyme catalyses Hydrolysis of terminal non-reducing alpha-L-arabinofuranoside residues in alpha-L-arabinosides.. Its pathway is glycan metabolism; L-arabinan degradation. The polypeptide is Alpha-L-arabinofuranosidase (abf1) (Hypocrea jecorina (Trichoderma reesei)).